The chain runs to 226 residues: Sugar fermentation stimulation protein homolog (226 aa).

Belongs to the SfsA family.

In Ruminiclostridium cellulolyticum (strain ATCC 35319 / DSM 5812 / JCM 6584 / H10) (Clostridium cellulolyticum), this protein is Sugar fermentation stimulation protein homolog.